Reading from the N-terminus, the 427-residue chain is CCA-adding enzyme (427 aa).

ATP is bound by residues Ser-50 and Lys-53. Residues Ser-50 and Lys-53 each contribute to the CTP site. The Mg(2+) site is built by Asp-61, Asp-63, and Asp-112. Residues His-135, Lys-155, and Tyr-164 each coordinate ATP. Residues His-135, Lys-155, and Tyr-164 each contribute to the CTP site.

Belongs to the tRNA nucleotidyltransferase/poly(A) polymerase family. Archaeal CCA-adding enzyme subfamily. Homodimer. Mg(2+) is required as a cofactor.

It catalyses the reaction a tRNA precursor + 2 CTP + ATP = a tRNA with a 3' CCA end + 3 diphosphate. The catalysed reaction is a tRNA with a 3' CCA end + 2 CTP + ATP = a tRNA with a 3' CCACCA end + 3 diphosphate. Functionally, catalyzes the addition and repair of the essential 3'-terminal CCA sequence in tRNAs without using a nucleic acid template. Adds these three nucleotides in the order of C, C, and A to the tRNA nucleotide-73, using CTP and ATP as substrates and producing inorganic pyrophosphate. tRNA 3'-terminal CCA addition is required both for tRNA processing and repair. Also involved in tRNA surveillance by mediating tandem CCA addition to generate a CCACCA at the 3' terminus of unstable tRNAs. While stable tRNAs receive only 3'-terminal CCA, unstable tRNAs are marked with CCACCA and rapidly degraded. This is CCA-adding enzyme from Picrophilus torridus (strain ATCC 700027 / DSM 9790 / JCM 10055 / NBRC 100828 / KAW 2/3).